Here is a 481-residue protein sequence, read N- to C-terminus: Glutamate--tRNA ligase (481 aa).

The 'HIGH' region motif lies at proline 11–asparagine 21. A 'KMSKS' region motif is present at residues lysine 255 to arginine 259. Position 258 (lysine 258) interacts with ATP.

The protein belongs to the class-I aminoacyl-tRNA synthetase family. Glutamate--tRNA ligase type 1 subfamily. In terms of assembly, monomer.

The protein resides in the cytoplasm. It catalyses the reaction tRNA(Glu) + L-glutamate + ATP = L-glutamyl-tRNA(Glu) + AMP + diphosphate. In terms of biological role, catalyzes the attachment of glutamate to tRNA(Glu) in a two-step reaction: glutamate is first activated by ATP to form Glu-AMP and then transferred to the acceptor end of tRNA(Glu). The protein is Glutamate--tRNA ligase of Streptococcus pyogenes serotype M3 (strain ATCC BAA-595 / MGAS315).